A 527-amino-acid chain; its full sequence is Glucose-6-phosphate isomerase (527 aa).

The active-site Proton donor is the E323. Catalysis depends on residues H352 and K454.

Belongs to the GPI family.

Its subcellular location is the cytoplasm. It catalyses the reaction alpha-D-glucose 6-phosphate = beta-D-fructose 6-phosphate. The protein operates within carbohydrate biosynthesis; gluconeogenesis. It participates in carbohydrate degradation; glycolysis; D-glyceraldehyde 3-phosphate and glycerone phosphate from D-glucose: step 2/4. Functionally, catalyzes the reversible isomerization of glucose-6-phosphate to fructose-6-phosphate. The chain is Glucose-6-phosphate isomerase from Prochlorococcus marinus (strain MIT 9215).